Here is a 339-residue protein sequence, read N- to C-terminus: Protein H339R (339 aa).

It belongs to the asfivirus H339R family. In terms of assembly, interacts with NACA (alpha chain of nascent polypeptide-associated complex).

Its subcellular location is the host cytoplasm. The protein resides in the host nucleus. The protein localises to the virion. This chain is Protein H339R, found in Ornithodoros (relapsing fever ticks).